The primary structure comprises 256 residues: tRNA pseudouridine synthase A (256 aa).

The active-site Nucleophile is the aspartate 49. Tyrosine 104 provides a ligand contact to substrate.

This sequence belongs to the tRNA pseudouridine synthase TruA family.

The enzyme catalyses uridine(38/39/40) in tRNA = pseudouridine(38/39/40) in tRNA. Functionally, formation of pseudouridine at positions 38, 39 and 40 in the anticodon stem and loop of transfer RNAs. In Methanopyrus kandleri (strain AV19 / DSM 6324 / JCM 9639 / NBRC 100938), this protein is tRNA pseudouridine synthase A.